A 1175-amino-acid polypeptide reads, in one-letter code: MEAAAKTVTVRAAPLGYVYVTPIEALRRDLLALLVARSADDAAAVAPLVRGLTVEAGFAGHVAVVAGARTTGLGGGLTLKLTPNHFHPNVFFFHNGDCVPPSSAAPALSRACEAARARFGFSAYRTPVDNAEETTGAEVCARLGLAADAHAAYLVVADGFKEAVYLCNAFLHYGGAGTVSINGHEAWRVPLYPVHLFMPDVNRLVADPFNAKNRSISEEFVYPRPFFNGPLCRLLHGYVLGPAAVATRVRNLDAVARGAAHLAFDENHESAVLPADVTFTLFEQRRRGGDAAAGGLERRMASVMSADAALSLEALVAAGVYDEEPPALDDWPVLSEAGAKDGGAAAASAGAPVSQAAALGAYVSRAAGLVGALVFSSNSVLYLTEVDDAGAADARKEGAGPSFNRFYQVAAPYLAGNPQTDKDGRVLLHTASQPATAPGNHDFAMDHLVMACGFCPQLLARVLFYLERCDAGTFVGRGDVDAVRYVAGSLDAEVPCSLCDRASRPACAHTTLHRLRHRSRASARRRSPMGVFGTMNSAYSDCDVLGNYASYGALKRPNDSEPPKAIMQDTYRAAVDRLLADVAGARIGETVTDHAGFRHALRALRDTVEQAADRFVRTLVETRDFKLRDALYDANHTMSLSLDPYSGALCPATSFLARRTLLAVLQDLALSQCHGVLHGQPVEGRNFRNQFQPVLRRRVVDMLNGGFVTAKTVTVTLADGIVAPDPTKGSAEPPARDHDGDLARVSFEVLRELRVKSRVMFSTGSGSLSDAARARVAGLAGAYQRPDTAVDVLNGPLGFLLKQHHATLFPRGKPPGGQSPNPQWFWTLLQRNQLPARLLTKDDIETIAAVKRFSVDYGAINYVNLTPGTVAELAQFYLANLILRYCDHKQFFINSLTGITMQSKRPRDPAAVMAWVRRPLADAADAERAAREVLDAPRDDTWVATYTSSHLLRSVMASRPLVVLGLGVSKYHGMAGNNRVFQAGNWSGLNGGKHVCPLMVFDRTRHFVLACPRVGFTCSQTGGGAGLHDHSLGEHVKTILADGGPLVQTAVYAAVLHALGARTQHLEPDDWRAIVDDEFLAAALAEINGRVADRDGRWSVEAAAELVRDLEGQTGADGGEETAFDFGACGAGGDVAGLAPASLVPAELGGKRPPPEDDLFDMGAPPEKRLTFDML.

A zinc finger lies at 496 to 509 (CSLCDRASRPACAH). A Required for filament formation motif is present at residues 825-826 (FW). The segment at 1151 to 1175 (KRPPPEDDLFDMGAPPEKRLTFDML) is required for nuclear localization.

Belongs to the herpesviridae major DNA-binding protein family. In terms of assembly, homooligomers. Forms double-helical filaments necessary for the formation of replication compartments within the host nucleus. Interacts with the origin-binding protein. Interacts with the helicase primase complex; this interaction stimulates primer synthesis activity of the helicase-primase complex. Interacts with the DNA polymerase. Interacts with the alkaline exonuclease; this interaction increases its nuclease processivity.

The protein resides in the host nucleus. Its function is as follows. Plays several crucial roles in viral infection. Participates in the opening of the viral DNA origin to initiate replication by interacting with the origin-binding protein. May disrupt loops, hairpins and other secondary structures present on ssDNA to reduce and eliminate pausing of viral DNA polymerase at specific sites during elongation. Promotes viral DNA recombination by performing strand-transfer, characterized by the ability to transfer a DNA strand from a linear duplex to a complementary single-stranded DNA circle. Can also catalyze the renaturation of complementary single strands. Additionally, reorganizes the host cell nucleus, leading to the formation of prereplicative sites and replication compartments. This process is driven by the protein which can form double-helical filaments in the absence of DNA. In Suid herpesvirus 1 (SuHV-1), this protein is Major DNA-binding protein.